The chain runs to 341 residues: Anthranilate phosphoribosyltransferase (341 aa).

5-phospho-alpha-D-ribose 1-diphosphate is bound by residues glycine 85, 88–89 (GD), threonine 93, 95–98 (NIST), 113–121 (KHGNRSASG), and serine 125. Glycine 85 contacts anthranilate. Mg(2+) is bound at residue serine 97. Asparagine 116 contacts anthranilate. An anthranilate-binding site is contributed by arginine 171. Positions 230 and 231 each coordinate Mg(2+).

It belongs to the anthranilate phosphoribosyltransferase family. Homodimer. Mg(2+) is required as a cofactor.

It carries out the reaction N-(5-phospho-beta-D-ribosyl)anthranilate + diphosphate = 5-phospho-alpha-D-ribose 1-diphosphate + anthranilate. Its pathway is amino-acid biosynthesis; L-tryptophan biosynthesis; L-tryptophan from chorismate: step 2/5. Catalyzes the transfer of the phosphoribosyl group of 5-phosphorylribose-1-pyrophosphate (PRPP) to anthranilate to yield N-(5'-phosphoribosyl)-anthranilate (PRA). The polypeptide is Anthranilate phosphoribosyltransferase (Prochlorococcus marinus (strain SARG / CCMP1375 / SS120)).